The primary structure comprises 229 residues: Cytochrome c oxidase subunit 2 (229 aa).

The Mitochondrial intermembrane portion of the chain corresponds to 1-26 (MANWTQLGLQDASSPLMEELIYFHDY). The helical transmembrane segment at 27-48 (TLIILTLITILVFYGLASLLFS) threads the bilayer. Over 49 to 62 (SNTNRFFLEGQGLE) the chain is Mitochondrial matrix. Residues 63 to 82 (TVWTIIPAVILIFIALPSLQ) form a helical membrane-spanning segment. Topologically, residues 83–229 (LLYLMDEVNN…ETWVSNFITE (147 aa)) are mitochondrial intermembrane. Residues His161, Cys196, Glu198, Cys200, His204, and Met207 each coordinate Cu cation. Glu198 serves as a coordination point for Mg(2+).

This sequence belongs to the cytochrome c oxidase subunit 2 family. As to quaternary structure, component of the cytochrome c oxidase (complex IV, CIV), a multisubunit enzyme composed of a catalytic core of 3 subunits and several supernumerary subunits. The complex exists as a monomer or a dimer and forms supercomplexes (SCs) in the inner mitochondrial membrane with ubiquinol-cytochrome c oxidoreductase (cytochrome b-c1 complex, complex III, CIII). Cu cation is required as a cofactor.

It localises to the mitochondrion inner membrane. The catalysed reaction is 4 Fe(II)-[cytochrome c] + O2 + 8 H(+)(in) = 4 Fe(III)-[cytochrome c] + 2 H2O + 4 H(+)(out). Component of the cytochrome c oxidase, the last enzyme in the mitochondrial electron transport chain which drives oxidative phosphorylation. The respiratory chain contains 3 multisubunit complexes succinate dehydrogenase (complex II, CII), ubiquinol-cytochrome c oxidoreductase (cytochrome b-c1 complex, complex III, CIII) and cytochrome c oxidase (complex IV, CIV), that cooperate to transfer electrons derived from NADH and succinate to molecular oxygen, creating an electrochemical gradient over the inner membrane that drives transmembrane transport and the ATP synthase. Cytochrome c oxidase is the component of the respiratory chain that catalyzes the reduction of oxygen to water. Electrons originating from reduced cytochrome c in the intermembrane space (IMS) are transferred via the dinuclear copper A center (CU(A)) of subunit 2 and heme A of subunit 1 to the active site in subunit 1, a binuclear center (BNC) formed by heme A3 and copper B (CU(B)). The BNC reduces molecular oxygen to 2 water molecules using 4 electrons from cytochrome c in the IMS and 4 protons from the mitochondrial matrix. The polypeptide is Cytochrome c oxidase subunit 2 (COII) (Patiria pectinifera (Starfish)).